Reading from the N-terminus, the 346-residue chain is NADH-ubiquinone oxidoreductase chain 2 (346 aa).

Transmembrane regions (helical) follow at residues methionine 1–isoleucine 21, histidine 25–serine 45, phenylalanine 60–alanine 80, cysteine 95–phenylalanine 115, leucine 124–methionine 144, leucine 149–glycine 169, isoleucine 178–valine 195, leucine 200–leucine 219, alanine 242–proline 262, glutamate 274–leucine 294, and alanine 326–valine 346.

The protein belongs to the complex I subunit 2 family.

It is found in the mitochondrion inner membrane. The enzyme catalyses a ubiquinone + NADH + 5 H(+)(in) = a ubiquinol + NAD(+) + 4 H(+)(out). Its function is as follows. Core subunit of the mitochondrial membrane respiratory chain NADH dehydrogenase (Complex I) that is believed to belong to the minimal assembly required for catalysis. Complex I functions in the transfer of electrons from NADH to the respiratory chain. The immediate electron acceptor for the enzyme is believed to be ubiquinone. In Mareca americana (American wigeon), this protein is NADH-ubiquinone oxidoreductase chain 2 (MT-ND2).